A 350-amino-acid polypeptide reads, in one-letter code: GTPase Obg (350 aa).

The region spanning 1 to 159 is the Obg domain; it reads MKFLDQAKIY…RWIWLRLKLI (159 aa). An OBG-type G domain is found at 160-328; the sequence is ADVGLVGLPN…VLRLLQDRVT (169 aa). GTP-binding positions include 166–173, 191–195, 213–216, 280–283, and 309–311; these read GLPNAGKS, FTTLH, DIPG, NKID, and SGV. Positions 173 and 193 each coordinate Mg(2+). A disordered region spans residues 331 to 350; it reads REAARDAAPPQAAAGREETA.

It belongs to the TRAFAC class OBG-HflX-like GTPase superfamily. OBG GTPase family. Monomer. It depends on Mg(2+) as a cofactor.

The protein localises to the cytoplasm. An essential GTPase which binds GTP, GDP and possibly (p)ppGpp with moderate affinity, with high nucleotide exchange rates and a fairly low GTP hydrolysis rate. Plays a role in control of the cell cycle, stress response, ribosome biogenesis and in those bacteria that undergo differentiation, in morphogenesis control. The protein is GTPase Obg of Gluconacetobacter diazotrophicus (strain ATCC 49037 / DSM 5601 / CCUG 37298 / CIP 103539 / LMG 7603 / PAl5).